Here is a 428-residue protein sequence, read N- to C-terminus: Trigger factor (428 aa).

The region spanning Gly163–Pro248 is the PPIase FKBP-type domain.

It belongs to the FKBP-type PPIase family. Tig subfamily.

It is found in the cytoplasm. The enzyme catalyses [protein]-peptidylproline (omega=180) = [protein]-peptidylproline (omega=0). In terms of biological role, involved in protein export. Acts as a chaperone by maintaining the newly synthesized protein in an open conformation. Functions as a peptidyl-prolyl cis-trans isomerase. This Geobacillus sp. (strain WCH70) protein is Trigger factor.